A 243-amino-acid chain; its full sequence is NADH-ubiquinone oxidoreductase chain 6 (243 aa).

The next 5 helical transmembrane spans lie at 16–36 (ISSV…SVIV), 41–61 (IISV…LILL), 69–89 (AYLI…LMLI), 104–124 (IPLT…LLPY), and 201–221 (IWLF…IVII).

It belongs to the complex I subunit 6 family.

The protein localises to the mitochondrion membrane. It catalyses the reaction a ubiquinone + NADH + 5 H(+)(in) = a ubiquinol + NAD(+) + 4 H(+)(out). Its function is as follows. Core subunit of the mitochondrial membrane respiratory chain NADH dehydrogenase (Complex I) that is believed to belong to the minimal assembly required for catalysis. Complex I functions in the transfer of electrons from NADH to the respiratory chain. The immediate electron acceptor for the enzyme is believed to be ubiquinone. The protein is NADH-ubiquinone oxidoreductase chain 6 (ndh-6) of Neurospora crassa (strain ATCC 24698 / 74-OR23-1A / CBS 708.71 / DSM 1257 / FGSC 987).